The following is a 234-amino-acid chain: Zinc finger FYVE domain-containing protein 21 (234 aa).

Residues 44–104 (DKECRRCMQC…QCAECALVSL (61 aa)) form an FYVE-type zinc finger. 8 residues coordinate Zn(2+): C50, C53, C66, C69, C74, C77, C96, and C99. Residues 107–234 (AEFYDKQLKV…AKLLYESRDQ (128 aa)) form a PH-like region.

As to quaternary structure, interacts with PTK2/FAK1.

The protein resides in the cell junction. It localises to the focal adhesion. The protein localises to the cytoplasmic vesicle. It is found in the endosome. Functionally, plays a role in cell adhesion, and thereby in cell motility which requires repeated formation and disassembly of focal adhesions. Regulates microtubule-induced PTK2/FAK1 dephosphorylation, an event important for focal adhesion disassembly, as well as integrin beta-1/ITGB1 cell surface expression. In Homo sapiens (Human), this protein is Zinc finger FYVE domain-containing protein 21 (ZFYVE21).